We begin with the raw amino-acid sequence, 340 residues long: uncharacterized protein (340 aa).

It localises to the virion. This is an uncharacterized protein from Acanthamoeba polyphaga (Amoeba).